The chain runs to 508 residues: Dihydroniloticin synthase CYP71CD4 (508 aa).

A helical membrane pass occupies residues 6 to 26; it reads LDFFSVTSFIIFFLFLFRLVW. Position 449 (Cys-449) interacts with heme.

This sequence belongs to the cytochrome P450 family. Heme serves as cofactor. Mainly expressed in roots and, to a lesser extent, in stems.

It localises to the membrane. It catalyses the reaction tirucalla-7,24-dien-3beta-ol + 2 reduced [NADPH--hemoprotein reductase] + 2 O2 = dihydroniloticin + 2 oxidized [NADPH--hemoprotein reductase] + 2 H2O + 2 H(+). It participates in secondary metabolite biosynthesis; terpenoid biosynthesis. Functionally, monooxygenase involved in the biosynthesis of quassinoids triterpene natural products such as ailanthone, chaparrinone, glaucarubinone and amarolide, allelopathic degraded triterpene lactones inhibiting the growth of other plants, and possessing antimalarial, antifeedant, insecticidal, anti-inflammatory and anticancer activities. Catalyzes the conversion of tirucalladienol to dihydroniloticin. The polypeptide is Dihydroniloticin synthase CYP71CD4 (Ailanthus altissima (Tree-of-heaven)).